Reading from the N-terminus, the 165-residue chain is MPRIAFYPGSFDPITNGHLDVVRHAVPLCDRLVVAIGVHPGKKPLFSTEERLRMLEDVCGPVATQAGCVLEAVTFDDLSVTAARKHGATIMIRGLRDGTDLDYEMQLAGMNEAMAPEVHTVFLPASPMVRPITATLVRQIAGMGGDVSTFVPPLVASLLKAKFAG.

Serine 10 serves as a coordination point for substrate. ATP is bound by residues 10-11 and histidine 18; that span reads SF. The substrate site is built by lysine 42, serine 79, and arginine 93. Residues 94 to 96, glutamate 104, and 129 to 135 each bind ATP; these read GLR and VRPITAT.

Belongs to the bacterial CoaD family. Homohexamer. Mg(2+) is required as a cofactor.

Its subcellular location is the cytoplasm. It carries out the reaction (R)-4'-phosphopantetheine + ATP + H(+) = 3'-dephospho-CoA + diphosphate. The protein operates within cofactor biosynthesis; coenzyme A biosynthesis; CoA from (R)-pantothenate: step 4/5. Reversibly transfers an adenylyl group from ATP to 4'-phosphopantetheine, yielding dephospho-CoA (dPCoA) and pyrophosphate. In Bradyrhizobium diazoefficiens (strain JCM 10833 / BCRC 13528 / IAM 13628 / NBRC 14792 / USDA 110), this protein is Phosphopantetheine adenylyltransferase.